Reading from the N-terminus, the 366-residue chain is S-adenosylmethionine:tRNA ribosyltransferase-isomerase (366 aa).

Belongs to the QueA family. In terms of assembly, monomer.

It localises to the cytoplasm. It catalyses the reaction 7-aminomethyl-7-carbaguanosine(34) in tRNA + S-adenosyl-L-methionine = epoxyqueuosine(34) in tRNA + adenine + L-methionine + 2 H(+). It functions in the pathway tRNA modification; tRNA-queuosine biosynthesis. Transfers and isomerizes the ribose moiety from AdoMet to the 7-aminomethyl group of 7-deazaguanine (preQ1-tRNA) to give epoxyqueuosine (oQ-tRNA). In Caulobacter vibrioides (strain ATCC 19089 / CIP 103742 / CB 15) (Caulobacter crescentus), this protein is S-adenosylmethionine:tRNA ribosyltransferase-isomerase.